The following is a 175-amino-acid chain: uncharacterized protein (175 aa).

Residues 143–166 (TCFLFCAFVTSIFIETDYSIFFLL) traverse the membrane as a helical segment.

The protein localises to the membrane. This is an uncharacterized protein from Saccharomyces cerevisiae (strain ATCC 204508 / S288c) (Baker's yeast).